A 178-amino-acid chain; its full sequence is Large ribosomal subunit protein bL25 (178 aa).

This sequence belongs to the bacterial ribosomal protein bL25 family. CTC subfamily. In terms of assembly, part of the 50S ribosomal subunit; part of the 5S rRNA/L5/L18/L25 subcomplex. Contacts the 5S rRNA. Binds to the 5S rRNA independently of L5 and L18.

This is one of the proteins that binds to the 5S RNA in the ribosome where it forms part of the central protuberance. This Helicobacter pylori (strain HPAG1) protein is Large ribosomal subunit protein bL25.